We begin with the raw amino-acid sequence, 393 residues long: Cholinephosphotransferase 1 (393 aa).

Residues 1 to 40 (MGFFIPQSSLGNLKLYKYQSDDRSFLSNHVLRPFWRKFAT) are Lumenal-facing. Residues 41 to 61 (IFPLWMAPNLVTLLGFCFIIF) traverse the membrane as a helical segment. Residues 62–172 (NVLTTLYYDP…YHTHKLYLAE (111 aa)) lie on the Cytoplasmic side of the membrane. The chain crosses the membrane as a helical span at residues 173 to 193 (FCGPVEGIIVLCISFIAVGIY). At 194–210 (GPQTIWHTKVAQFSWQD) the chain is on the lumenal side. A helical transmembrane segment spans residues 211 to 231 (FVFDVETVHLMYAFCTGALIF). The Cytoplasmic segment spans residues 232–263 (NIVTAHTNVVRYYESQSTKSATPSKTAENISK). Residues 264 to 284 (AVNGLLPFFAYFSSIFTLVLI) traverse the membrane as a helical segment. Position 285 (glutamine 285) is a topological domain, lumenal. The chain crosses the membrane as a helical span at residues 286-306 (PSFISLALILSIGFSVAFVVG). Residues 307–320 (RMIIAHLTMQPFPM) are Cytoplasmic-facing. A helical transmembrane segment spans residues 321–341 (VNFPFLIPTIQLVLYAFMVYV). The Lumenal segment spans residues 342-348 (LDYQKGS). A helical transmembrane segment spans residues 349–369 (IVSALVWMGLGLTLAIHGMFI). Residues 370 to 393 (NDIIYDITTFLDIYALSIKHPKEI) are Cytoplasmic-facing.

This sequence belongs to the CDP-alcohol phosphatidyltransferase class-I family. Mg(2+) is required as a cofactor.

Its subcellular location is the microsome membrane. It is found in the endoplasmic reticulum membrane. The protein localises to the mitochondrion outer membrane. It carries out the reaction CDP-choline + a 1,2-diacyl-sn-glycerol = a 1,2-diacyl-sn-glycero-3-phosphocholine + CMP + H(+). It catalyses the reaction CDP-N,N-dimethylethanolamine + a 1,2-diacyl-sn-glycerol = a 1,2-diacyl-sn-glycero-3-phospho-N,N-dimethylethanolamine + CMP + H(+). It functions in the pathway phospholipid metabolism; phosphatidylcholine biosynthesis; phosphatidylcholine from phosphocholine: step 2/2. With respect to regulation, requires a divalent cation activator, and is inhibited by CMP. Activated by phospholipids, especially phosphatidylcholine. In terms of biological role, catalyzes the final step in the CDP-choline route leading to phosphatidylcholin (PC). Preferentially uses CDP-monomethylethanolamine as aminoalcohol substrate. Shows highest activity toward di- and mono-unsaturated diacylglycerol species as lipid substrates. The CDP-choline pathway only contributes to net PC synthesis if exogenous choline is present. In its absence, this pathway recycles choline from PC turnover and may contribute to maintaining the proper PC species composition. The protein is Cholinephosphotransferase 1 (CPT1) of Saccharomyces cerevisiae (strain ATCC 204508 / S288c) (Baker's yeast).